We begin with the raw amino-acid sequence, 102 residues long: Small ribosomal subunit protein bS18 (102 aa).

It belongs to the bacterial ribosomal protein bS18 family. In terms of assembly, part of the 30S ribosomal subunit. Forms a tight heterodimer with protein bS6.

Functionally, binds as a heterodimer with protein bS6 to the central domain of the 16S rRNA, where it helps stabilize the platform of the 30S subunit. The protein is Small ribosomal subunit protein bS18 of Orientia tsutsugamushi (strain Ikeda) (Rickettsia tsutsugamushi).